Reading from the N-terminus, the 264-residue chain is Rano class II histocompatibility antigen, D-1 beta chain (264 aa).

The N-terminal stretch at Met1 to Leu26 is a signal peptide. Positions Val27–Arg120 are beta-1. Over Val27–Lys226 the chain is Extracellular. Intrachain disulfides connect Cys42–Cys106 and Cys144–Cys200. N-linked (GlcNAc...) asparagine glycosylation is present at Asn46. A beta-2 region spans residues Thr121–Trp215. Residues Pro124–Ser228 form the Ig-like C1-type domain. Residues Lys216 to Lys226 are connecting peptide. Residues Met227–Phe248 traverse the membrane as a helical segment. The Cytoplasmic segment spans residues Arg249 to Asn264.

The protein belongs to the MHC class II family.

Its subcellular location is the membrane. Functionally, involved in the presentation of foreign antigens to the immune system. This chain is Rano class II histocompatibility antigen, D-1 beta chain (RT1-Db1), found in Rattus norvegicus (Rat).